Reading from the N-terminus, the 288-residue chain is 2-hydroxy-6-oxononadienedioate/2-hydroxy-6-oxononatrienedioate hydrolase (288 aa).

Residue His267 is the Proton acceptor of the active site.

This sequence belongs to the AB hydrolase superfamily. MhpC family. As to quaternary structure, homodimer.

It carries out the reaction (2Z,4E)-2-hydroxy-6-oxonona-2,4-dienedioate + H2O = (2Z)-2-hydroxypenta-2,4-dienoate + succinate + H(+). The enzyme catalyses (2Z,4E,7E)-2-hydroxy-6-oxonona-2,4,7-trienedioate + H2O = (2Z)-2-hydroxypenta-2,4-dienoate + fumarate + H(+). Its pathway is aromatic compound metabolism; 3-phenylpropanoate degradation. In terms of biological role, catalyzes the cleavage of the C5-C6 bond of 2-hydroxy-6-oxononadienedioate and 2-hydroxy-6-oxononatrienedioate, a dienol ring fission product of the bacterial meta-cleavage pathway for degradation of phenylpropionic acid. This is 2-hydroxy-6-oxononadienedioate/2-hydroxy-6-oxononatrienedioate hydrolase from Klebsiella pneumoniae subsp. pneumoniae (strain ATCC 700721 / MGH 78578).